A 155-amino-acid chain; its full sequence is Probable calcium-binding protein CML44 (155 aa).

EF-hand domains are found at residues 6–41 (ITTN…LGWA), 85–120 (DNDE…LGFE), and 130–155 (RMIR…ILHV). Ca(2+) contacts are provided by Asp-19, Asn-21, Asp-23, Glu-30, Asp-98, Asn-100, Asp-102, Tyr-104, and Glu-109.

Functionally, potential calcium sensor. This is Probable calcium-binding protein CML44 (CML44) from Arabidopsis thaliana (Mouse-ear cress).